Consider the following 739-residue polypeptide: Disintegrin and metalloproteinase domain-containing protein 18 (739 aa).

Residues 1 to 16 form the signal peptide; the sequence is MFLLLALLTELGRLQA. A propeptide spanning residues 17–184 is cleaved from the precursor; it reads HEGSEGIFLH…IKNLSKLLPQ (168 aa). Residues asparagine 36, asparagine 76, asparagine 122, asparagine 149, asparagine 156, asparagine 177, and asparagine 294 are each glycosylated (N-linked (GlcNAc...) asparagine). The Extracellular portion of the chain corresponds to 177 to 687; sequence NLSKLLPQYL…EKGYNTHWNN (511 aa). One can recognise a Peptidase M12B domain in the interval 184–381; it reads QYLEIYIIVE…FETKCLQKLS (198 aa). 4 disulfides stabilise this stretch: cysteine 293-cysteine 376, cysteine 335-cysteine 360, cysteine 337-cysteine 342, and cysteine 450-cysteine 471. 5 N-linked (GlcNAc...) asparagine glycosylation sites follow: asparagine 359, asparagine 465, asparagine 561, asparagine 611, and asparagine 625. The Disintegrin domain maps to 390 to 479; the sequence is QPVCGNGILE…NCVPDTYALN (90 aa). Positions 620–654 constitute an EGF-like domain; the sequence is MGYNCNATTKCKGKGICNNFGNCQCFPGHRPPDCK. 3 cysteine pairs are disulfide-bonded: cysteine 624/cysteine 636, cysteine 630/cysteine 642, and cysteine 644/cysteine 653. The chain crosses the membrane as a helical span at residues 688–708; sequence WFILSFCIFLPFFIVFTTVIF. At 709–739 the chain is on the cytoplasmic side; it reads KRNEISKSCNRENAEYNRNSSVVSESDDVGH.

Post-translationally, the prodomain and the metalloprotease-like domain are cleaved during the epididymal maturation of the spermatozoa. In terms of tissue distribution, expressed specifically in testis.

The protein resides in the membrane. Its function is as follows. Sperm surface membrane protein that may be involved in spermatogenesis and fertilization. This is a non catalytic metalloprotease-like protein. The sequence is that of Disintegrin and metalloproteinase domain-containing protein 18 (ADAM18) from Homo sapiens (Human).